A 585-amino-acid chain; its full sequence is Probable G-protein coupled receptor Mth-like 10 (585 aa).

Positions 1 to 32 (MPKKIHQPGGSLYCGVTLLGVLCLVVFRLIPG) are cleaved as a signal peptide. At 33-250 (IPFGTYVMAE…DHSTVKIINS (218 aa)) the chain is on the extracellular side. 5 disulfides stabilise this stretch: cysteine 56/cysteine 110, cysteine 112/cysteine 117, cysteine 121/cysteine 216, cysteine 122/cysteine 135, and cysteine 177/cysteine 236. N-linked (GlcNAc...) asparagine glycosylation is found at asparagine 63 and asparagine 72. Residues asparagine 142, asparagine 152, asparagine 157, asparagine 198, and asparagine 223 are each glycosylated (N-linked (GlcNAc...) asparagine). Residues 251–271 (YAMMFSIPFMMLTIAVYLLIP) traverse the membrane as a helical segment. Residues 272–280 (ELRNQHGKS) are Cytoplasmic-facing. The helical transmembrane segment at 281 to 301 (LVCYLIGLSVGYSSLCYVQLY) threads the bilayer. The Extracellular portion of the chain corresponds to 302 to 312 (QVDATGVTCKV). A helical membrane pass occupies residues 313–333 (FGYTAYFFFMGAYMWLSVISF). Residues 334 to 353 (DLWHNFRGTRGINRFQEKKR) are Cytoplasmic-facing. Residues 354–374 (FLFYSLYSWGIALVFLAFTYC) traverse the membrane as a helical segment. Residues 375-404 (AQQLTNLPANLKPGIGDGVYCWLDMSNWAA) lie on the Extracellular side of the membrane. Residues 405–425 (MIYFYGPILAIVVANTIMFIM) form a helical membrane-spanning segment. At 426–466 (TAIKIHGVQREMARIIASENSTKNLRTEKDKRFYRAWSNYR) the chain is on the cytoplasmic side. Residues 467-487 (FGLFLRLFLIMGITWLTELIS) form a helical membrane-spanning segment. Residues 488–498 (YFVGSDKGWSK) are Extracellular-facing. Residues 499–519 (LFYISDLANAMQGFLIFMLFV) traverse the membrane as a helical segment. The Cytoplasmic portion of the chain corresponds to 520-585 (MKKKVKHLIT…VDPQKTTIFR (66 aa)).

The protein belongs to the G-protein coupled receptor 2 family. Mth subfamily.

It is found in the cell membrane. The chain is Probable G-protein coupled receptor Mth-like 10 (mthl10) from Drosophila melanogaster (Fruit fly).